A 212-amino-acid polypeptide reads, in one-letter code: Nitrogen regulatory protein P-II homolog (212 aa).

Low complexity-rich tracts occupy residues 1–12, 32–46, and 63–74; these read MSSPATAAAAAA, TTTT…SRSR, and PPTAARAQSAAA. The transit peptide at 1 to 68 directs the protein to the chloroplast; it reads MSSPATAAAA…PRRLPPTAAR (68 aa). The segment at 1 to 74 is disordered; it reads MSSPATAAAA…TAARAQSAAA (74 aa). ATP contacts are provided by residues 117–121 and 170–173; these read GFGAQ and GDGK. Gly119 provides a ligand contact to Mg(2+).

It belongs to the P(II) protein family. Homodimer.

It localises to the plastid. It is found in the chloroplast. Its function is as follows. Participates in sensing carbon and organic nitrogen status and regulates some steps of primary carbon and nitrogen metabolism. This Oryza sativa subsp. japonica (Rice) protein is Nitrogen regulatory protein P-II homolog (GLB).